The following is a 315-amino-acid chain: Glutathione synthetase (315 aa).

One can recognise an ATP-grasp domain in the interval 125-310 (KLYTAWFADL…ITGMLMDAIE (186 aa)). 151-207 (WEKHGDIIMKPLDGMGGASIFRVKEGDPNIGVIAETLTELGNRYCMAQNYLPAIKDG) lines the ATP pocket. Positions 281 and 283 each coordinate Mg(2+).

This sequence belongs to the prokaryotic GSH synthase family. Mg(2+) is required as a cofactor. Mn(2+) serves as cofactor.

It catalyses the reaction gamma-L-glutamyl-L-cysteine + glycine + ATP = glutathione + ADP + phosphate + H(+). It functions in the pathway sulfur metabolism; glutathione biosynthesis; glutathione from L-cysteine and L-glutamate: step 2/2. This is Glutathione synthetase from Salmonella typhi.